Reading from the N-terminus, the 353-residue chain is Quinolinate synthase (353 aa).

Iminosuccinate-binding residues include histidine 49 and serine 70. Cysteine 115 serves as a coordination point for [4Fe-4S] cluster. Residues 141–143 and serine 158 contribute to the iminosuccinate site; that span reads YAN. Cysteine 202 lines the [4Fe-4S] cluster pocket. Iminosuccinate is bound by residues 228–230 and threonine 245; that span reads HPE. Cysteine 299 provides a ligand contact to [4Fe-4S] cluster.

It belongs to the quinolinate synthase family. Type 1 subfamily. [4Fe-4S] cluster is required as a cofactor.

The protein localises to the cytoplasm. It catalyses the reaction iminosuccinate + dihydroxyacetone phosphate = quinolinate + phosphate + 2 H2O + H(+). It participates in cofactor biosynthesis; NAD(+) biosynthesis; quinolinate from iminoaspartate: step 1/1. Catalyzes the condensation of iminoaspartate with dihydroxyacetone phosphate to form quinolinate. This chain is Quinolinate synthase, found in Marinobacter nauticus (strain ATCC 700491 / DSM 11845 / VT8) (Marinobacter aquaeolei).